Reading from the N-terminus, the 66-residue chain is Ejaculatory bulb-specific protein 2 (66 aa).

The first 20 residues, 1 to 20, serve as a signal peptide directing secretion; that stretch reads MIRILVLMITFTLMTGSALC.

In terms of tissue distribution, specifically expressed in the ejaculatory bulb and seminal fluid.

Its subcellular location is the secreted. Functionally, protein component of the posterior mating plug. In Drosophila melanogaster (Fruit fly), this protein is Ejaculatory bulb-specific protein 2.